The following is a 242-amino-acid chain: Small ribosomal subunit protein uS5 (242 aa).

Over residues 1-14 (MADENSTGPGNQPE) the composition is skewed to polar residues. The disordered stretch occupies residues 1–65 (MADENSTGPG…DRRPRDEDGG (65 aa)). Residues 41–65 (DGGRGGRDGGRGRRDDRRPRDEDGG) show a composition bias toward basic and acidic residues. An S5 DRBM domain is found at 68-131 (LIEKLVHINR…AAAKKAMIRV (64 aa)). The segment at 204-242 (EQTSPKSVAQRRGKKVSDLIKRGGASDRAAEAEAAAVTE) is disordered. Basic and acidic residues predominate over residues 218–234 (KVSDLIKRGGASDRAAE).

This sequence belongs to the universal ribosomal protein uS5 family. Part of the 30S ribosomal subunit. Contacts proteins S4 and S8.

Its function is as follows. With S4 and S12 plays an important role in translational accuracy. Located at the back of the 30S subunit body where it stabilizes the conformation of the head with respect to the body. The protein is Small ribosomal subunit protein uS5 of Sphingopyxis alaskensis (strain DSM 13593 / LMG 18877 / RB2256) (Sphingomonas alaskensis).